A 251-amino-acid polypeptide reads, in one-letter code: Proteasome subunit alpha type-7 (251 aa).

It belongs to the peptidase T1A family. As to quaternary structure, the 26S proteasome consists of a 20S proteasome core and two 19S regulatory subunits. The 20S proteasome core is composed of 28 subunits that are arranged in four stacked rings, resulting in a barrel-shaped structure. The two end rings are each formed by seven alpha subunits, and the two central rings are each formed by seven beta subunits. The catalytic chamber with the active sites is on the inside of the barrel.

The protein resides in the cytoplasm. It localises to the nucleus. Its function is as follows. The proteasome is a multicatalytic proteinase complex which is characterized by its ability to cleave peptides with Arg, Phe, Tyr, Leu, and Glu adjacent to the leaving group at neutral or slightly basic pH. The proteasome has an ATP-dependent proteolytic activity. The polypeptide is Proteasome subunit alpha type-7 (psma7) (Carassius auratus (Goldfish)).